The primary structure comprises 524 residues: Lysophospholipid acyltransferase LPCAT4 (524 aa).

2 helical membrane passes run 40-62 (CLLGVLLAPIRVLLAFIVLFLLW) and 87-107 (TVCHNGVLGLSRLLFFLLGFL). The short motif at 129–134 (HSTFFD) is the HXXXXD motif element. Asparagine 152 carries N-linked (GlcNAc...) asparagine glycosylation. Residues 490-524 (PHKPRSTSQIPNASSPSSPTALANGTVQAPKQKGD) are disordered. Residues 495-518 (STSQIPNASSPSSPTALANGTVQA) are compositionally biased toward polar residues.

This sequence belongs to the 1-acyl-sn-glycerol-3-phosphate acyltransferase family. In terms of tissue distribution, widely expressed with much higher level in brain. Expressed in erythroleukemic cells but not in reticulocytes.

The protein resides in the endoplasmic reticulum membrane. The catalysed reaction is a 1-acyl-sn-glycero-3-phosphoethanolamine + an acyl-CoA = a 1,2-diacyl-sn-glycero-3-phosphoethanolamine + CoA. It carries out the reaction a 1-O-(1Z-alkenyl)-sn-glycero-3-phosphoethanolamine + an acyl-CoA = a 1-O-(1Z-alkenyl)-2-acyl-sn-glycero-3-phosphoethanolamine + CoA. It catalyses the reaction a 1-acyl-sn-glycero-3-phosphocholine + an acyl-CoA = a 1,2-diacyl-sn-glycero-3-phosphocholine + CoA. The enzyme catalyses a 1-O-alkyl-sn-glycero-3-phosphocholine + acetyl-CoA = a 1-O-alkyl-2-acetyl-sn-glycero-3-phosphocholine + CoA. The catalysed reaction is a 1-acyl-sn-glycero-3-phospho-L-serine + an acyl-CoA = a 1,2-diacyl-sn-glycero-3-phospho-L-serine + CoA. It carries out the reaction octanoyl-CoA + a 1-acyl-sn-glycero-3-phosphoethanolamine = 1-acyl-2-octanoyl-sn-glycero-3-phosphoethanolamine + CoA. It catalyses the reaction a 1-acyl-sn-glycero-3-phosphoethanolamine + hexadecanoyl-CoA = 1-acyl-2-hexadecanoyl-sn-glycero-3-phosphoethanolamine + CoA. The enzyme catalyses a 1-acyl-sn-glycero-3-phosphoethanolamine + octadecanoyl-CoA = 1-acyl-2-octadecanoyl-sn-glycero-3-phosphoethanolamine + CoA. The catalysed reaction is a 1-acyl-sn-glycero-3-phosphoethanolamine + (9Z)-octadecenoyl-CoA = 1-acyl-2-(9Z)-octadecenoyl-sn-glycero-3-phosphoethanolamine + CoA. It carries out the reaction a 1-acyl-sn-glycero-3-phosphoethanolamine + (5Z,8Z,11Z,14Z)-eicosatetraenoyl-CoA = 1-acyl-2-(5Z,8Z,11Z,14Z)-eicosatetraenoyl-sn-glycero-3-phosphoethanolamine + CoA. It catalyses the reaction a 1-O-(1Z-alkenyl)-sn-glycero-3-phosphoethanolamine + octanoyl-CoA = 1-O-(1Z)-alkenyl-2-octanoyl-sn-glycero-3-phosphoethanolamine + CoA. The enzyme catalyses a 1-O-(1Z-alkenyl)-sn-glycero-3-phosphoethanolamine + hexadecanoyl-CoA = 1-O-(1Z)-alkenyl-2-hexadecanoyl-sn-glycero-3-phosphoethanolamine + CoA. The catalysed reaction is a 1-O-(1Z-alkenyl)-sn-glycero-3-phosphoethanolamine + octadecanoyl-CoA = 1-O-(1Z)-alkenyl-2-octadecanoyl-sn-glycero-3-phosphoethanolamine + CoA. It carries out the reaction a 1-O-(1Z-alkenyl)-sn-glycero-3-phosphoethanolamine + (9Z)-octadecenoyl-CoA = 1-O-(1Z)-alkenyl-2-(9Z)-octadecenoyl-sn-glycero-3-phosphoethanolamine + CoA. It catalyses the reaction a 1-O-(1Z-alkenyl)-sn-glycero-3-phosphoethanolamine + (5Z,8Z,11Z,14Z)-eicosatetraenoyl-CoA = 1-O-(1Z)-alkenyl-2-(5Z,8Z,11Z,14Z)-eicosatetraenoyl-sn-glycero-3-phosphoethanolamine + CoA. The enzyme catalyses a 1-acyl-sn-glycero-3-phosphocholine + hexadecanoyl-CoA = 1-acyl-2-hexadecanoyl-sn-glycero-3-phosphocholine + CoA. The catalysed reaction is a 1-acyl-sn-glycero-3-phosphocholine + (9Z)-octadecenoyl-CoA = a 1-acyl-2-(9Z)-octadecenoyl-sn-glycero-3-phosphocholine + CoA. It carries out the reaction 1-O-hexadecyl-sn-glycero-3-phosphocholine + (9Z)-octadecenoyl-CoA = 1-O-hexadecyl-2-(9Z)-octadecenoyl-sn-glycero-3-phosphocholine + CoA. It catalyses the reaction 1-O-hexadecyl-sn-glycero-3-phosphocholine + (5Z,8Z,11Z,14Z)-eicosatetraenoyl-CoA = 1-O-hexadecyl-2-(5Z,8Z,11Z,14Z)-eicosatetraenoyl-sn-glycero-3-phosphocholine + CoA. The enzyme catalyses 1-hexadecanoyl-sn-glycero-3-phospho-L-serine + (9Z)-octadecenoyl-CoA = 1-hexadecanoyl-2-(9Z-octadecenoyl)-sn-glycero-3-phospho-L-serine + CoA. The catalysed reaction is 1-octadecanoyl-sn-glycero-3-phospho-(1'-sn-glycerol) + (9Z)-octadecenoyl-CoA = 1-octadecanoyl-2-(9Z-octadecenoyl)-sn-glycero-3-phospho-(1'-sn-glycerol) + CoA. It carries out the reaction 1-octadecanoyl-sn-glycero-3-phospho-(1'-sn-glycerol) + (5Z,8Z,11Z,14Z)-eicosatetraenoyl-CoA = 1-octadecanoyl-2-(5Z,8Z,11Z,14Z-eicosatetraenoyl)-sn-glycero-3-phospho-(1'-sn-glycerol) + CoA. It participates in lipid metabolism; phospholipid metabolism. Its function is as follows. Displays acyl-CoA-dependent lysophospholipid acyltransferase activity with a subset of lysophospholipids as substrates; converts lysophosphatidylethanolamine to phosphatidylethanolamine, 1-alkenyl-lysophatidylethanolamine to 1-alkenyl-phosphatidylethanolamine, lysophosphatidylglycerol and alkyl-lysophosphatidylcholine to phosphatidylglycerol and alkyl-phosphatidylcholine, respectively. In contrast, has no lysophosphatidylinositol, glycerol-3-phosphate, diacylglycerol or lysophosphatidic acid acyltransferase activity. Prefers long chain acyl-CoAs (C16, C18) as acyl donors. Converts lysophosphatidylcholine to phosphatidycholine. In Mus musculus (Mouse), this protein is Lysophospholipid acyltransferase LPCAT4 (Lpcat4).